An 86-amino-acid chain; its full sequence is UPF0297 protein CA_C1679 (86 aa).

This sequence belongs to the UPF0297 family.

The sequence is that of UPF0297 protein CA_C1679 from Clostridium acetobutylicum (strain ATCC 824 / DSM 792 / JCM 1419 / IAM 19013 / LMG 5710 / NBRC 13948 / NRRL B-527 / VKM B-1787 / 2291 / W).